The following is a 430-amino-acid chain: Lipoyl synthase, mitochondrial (430 aa).

The N-terminal 37 residues, methionine 1–tyrosine 37, are a transit peptide targeting the mitochondrion. Residues threonine 40–threonine 56 are compositionally biased toward low complexity. Residues threonine 40–phenylalanine 64 are disordered. Cysteine 141, cysteine 146, cysteine 152, cysteine 172, cysteine 176, cysteine 179, and serine 387 together coordinate [4Fe-4S] cluster. Residues glycine 155–leucine 376 form the Radical SAM core domain.

Belongs to the radical SAM superfamily. Lipoyl synthase family. Requires [4Fe-4S] cluster as cofactor.

The protein localises to the mitochondrion. The catalysed reaction is [[Fe-S] cluster scaffold protein carrying a second [4Fe-4S](2+) cluster] + N(6)-octanoyl-L-lysyl-[protein] + 2 oxidized [2Fe-2S]-[ferredoxin] + 2 S-adenosyl-L-methionine + 4 H(+) = [[Fe-S] cluster scaffold protein] + N(6)-[(R)-dihydrolipoyl]-L-lysyl-[protein] + 4 Fe(3+) + 2 hydrogen sulfide + 2 5'-deoxyadenosine + 2 L-methionine + 2 reduced [2Fe-2S]-[ferredoxin]. Its pathway is protein modification; protein lipoylation via endogenous pathway; protein N(6)-(lipoyl)lysine from octanoyl-[acyl-carrier-protein]: step 2/2. In terms of biological role, catalyzes the radical-mediated insertion of two sulfur atoms into the C-6 and C-8 positions of the octanoyl moiety bound to the lipoyl domains of lipoate-dependent enzymes, thereby converting the octanoylated domains into lipoylated derivatives. This chain is Lipoyl synthase, mitochondrial, found in Blastomyces gilchristii (strain SLH14081) (Blastomyces dermatitidis).